The primary structure comprises 317 residues: Hps1-dma1 cluster cytochrome P450 monooxygenase cyp3.1 (317 aa).

Positions 183–205 are disordered; sequence PAIETDRKTSSHSRSPTALADKQ. Cys-260 provides a ligand contact to heme.

The protein belongs to the cytochrome P450 family. The cofactor is heme.

Its pathway is secondary metabolite biosynthesis. In terms of biological role, cytochrome P450 monooxygenase; part of the hps1-dma1 gene cluster that probably mediates the biosynthesis a derivative of cyclopiazonic acid (CPA). The hybrid polyketide synthase-nonribosomal peptide synthetase (PKS-NRPS) nps1 might incorporates acetyl-CoA, malonyl-CoA, and tryptophan (Trp) and utilizes a C-terminal redox-incompetent reductase domain to make and release the tryptophan tetramic acid, cyclo-acetoacetyl-L-tryptophan (c-AATrp), as the first intermediate in the pathway. In addition, the cluster also includes the tryptophan dimethylallyltransferase dma1, the FAD-dependent oxidoreductase toxD, the cytochrome P450 monooxygenase cyp3.1 and the methyltransferase DOTSEDRAFT_139328; the latter 2 being not present in all CPA-producing fungi but involved in additional modifications that occur in biosynthesis the of a range of CPA and CPA-like products. Further studies are required to clarify whether the CPA-like hps1-dma1 cluster is functional or a non-functional relic reflecting evolution of D.septosporum. The sequence is that of Hps1-dma1 cluster cytochrome P450 monooxygenase cyp3.1 (cyp3.1) from Dothistroma septosporum (strain NZE10 / CBS 128990) (Red band needle blight fungus).